The sequence spans 698 residues: Probable metal-nicotianamine transporter YSL17 (698 aa).

The segment at 1–36 is disordered; that stretch reads MAEEARGGQRVVVDDDREDASSVASSTERAFEGEPL. Transmembrane regions (helical) follow at residues 43–63, 67–87, 114–134, 157–177, 216–236, 277–297, 322–342, 395–415, 424–444, 463–483, 511–531, 567–587, 607–627, and 644–664; these read VTAR…VVAM, LTSG…FFLA, IAVV…YILG, IGRV…IIVP, VVTL…QWFF, MITA…WPYI, VFVG…SALV, WVAV…VPLL, VAAA…GVGV, SWVG…GIIV, VGQV…FWVF, LPDH…ALSA, IGVA…AVGC, and LLLP…SLAS.

The protein belongs to the YSL (TC 2.A.67.2) family. Expressed at low levels in roots.

It is found in the membrane. Its function is as follows. May be involved in the transport of nicotianamine-chelated metals. This chain is Probable metal-nicotianamine transporter YSL17 (YSL17), found in Oryza sativa subsp. japonica (Rice).